A 405-amino-acid polypeptide reads, in one-letter code: Tryptophan synthase beta chain (405 aa).

Residue Lys-98 is modified to N6-(pyridoxal phosphate)lysine.

It belongs to the TrpB family. As to quaternary structure, tetramer of two alpha and two beta chains. The cofactor is pyridoxal 5'-phosphate.

The enzyme catalyses (1S,2R)-1-C-(indol-3-yl)glycerol 3-phosphate + L-serine = D-glyceraldehyde 3-phosphate + L-tryptophan + H2O. Its pathway is amino-acid biosynthesis; L-tryptophan biosynthesis; L-tryptophan from chorismate: step 5/5. Its function is as follows. The beta subunit is responsible for the synthesis of L-tryptophan from indole and L-serine. This Xanthomonas campestris pv. campestris (strain 8004) protein is Tryptophan synthase beta chain.